Reading from the N-terminus, the 513-residue chain is Solute carrier family 2, facilitated glucose transporter member 10 (513 aa).

Residues 1-6 (MGCSVL) lie on the Cytoplasmic side of the membrane. A helical transmembrane segment spans residues 7–27 (LLTITVSTLGGLVFGYELGII). Residues 28–46 (SGALPQLQTHFSLGCVQQE) lie on the Extracellular side of the membrane. The helical transmembrane segment at 47–67 (AVVSALLIGSLFASIIGGWLI) threads the bilayer. At 68–80 (DRHGRRTSILLSN) the chain is on the cytoplasmic side. The chain crosses the membrane as a helical span at residues 81 to 101 (LLILAGSVILTTGTSFFALVI). At 102-104 (GRA) the chain is on the extracellular side. A helical membrane pass occupies residues 105–125 (VIGFAMTVSSMSCCIFVSEMV). The Cytoplasmic portion of the chain corresponds to 126-130 (TPERR). The chain crosses the membrane as a helical span at residues 131 to 151 (GLMVTLYEVGITVGILIAYAV). Residues 152 to 164 (NYIFNNVPLTGWR) lie on the Extracellular side of the membrane. Residues 165-185 (YMFGFAIIPSLIQLASIVLLP) form a helical membrane-spanning segment. Topologically, residues 186-236 (KQAEVFVIHDDDSRQADRLTEETETSNQHQQSEKYGVSDLFKSKDNMRRRT) are cytoplasmic. Residues 237 to 257 (VIGVGLVLSQQFTGQPNVLFY) traverse the membrane as a helical segment. 246–247 (QQ) serves as a coordination point for D-glucose. Residues 258–272 (ASTILFSVGFQSNAS) are Extracellular-facing. The N-linked (GlcNAc...) asparagine glycan is linked to N270. Residues 273–293 (AILASVGFGIVKVIATLLAML) form a helical membrane-spanning segment. The Cytoplasmic portion of the chain corresponds to 294–301 (CSDRAGRR). A helical membrane pass occupies residues 302 to 322 (SLLIGGCSMLAVGLILTGFLC). The Extracellular segment spans residues 323-376 (RQSVIDTTKRCTSVGPHSNLTLSAEHDEGVGFSSQTLDVHEHLRSFSQSEDIYK). A glycan (N-linked (GlcNAc...) asparagine) is linked at N341. Residues 377–397 (WIIFTCLMAVVSAFSVSFGPM) traverse the membrane as a helical segment. Residues 398–422 (TWVVLSEIFPKDIRGRAFSFINCFN) lie on the Cytoplasmic side of the membrane. W399 serves as a coordination point for D-glucose. The next 2 membrane-spanning stretches (helical) occupy residues 423–443 (VGAN…IGLS) and 444–464 (GVFL…YLVL). The Cytoplasmic portion of the chain corresponds to 465–513 (PETKGKSLQDIDRELSQTRMIHRQELCSIFQRRRFSPGYQRVQLTSTAT).

It belongs to the major facilitator superfamily. Sugar transporter (TC 2.A.1.1) family. Glucose transporter subfamily.

The protein resides in the endomembrane system. It is found in the cytoplasm. The protein localises to the perinuclear region. The catalysed reaction is D-glucose(out) = D-glucose(in). Its function is as follows. Facilitative glucose transporter required for the development of the cardiovascular system. The chain is Solute carrier family 2, facilitated glucose transporter member 10 from Danio rerio (Zebrafish).